The following is a 62-amino-acid chain: MAKCEVCSKATSFGNSRSHALNATSRTWKPNVRKIKIIDNGTPRSIKICTRCLRSNKVTRAI.

It belongs to the bacterial ribosomal protein bL28 family.

This is Large ribosomal subunit protein bL28 from Ruminiclostridium cellulolyticum (strain ATCC 35319 / DSM 5812 / JCM 6584 / H10) (Clostridium cellulolyticum).